Reading from the N-terminus, the 223-residue chain is Phosphoribosylformylglycinamidine synthase subunit PurQ (223 aa).

Positions 4–223 (KIGVITFPGT…FLSAIGTIAA (220 aa)) constitute a Glutamine amidotransferase type-1 domain. Catalysis depends on Cys-87, which acts as the Nucleophile. Catalysis depends on residues His-195 and Glu-197.

In terms of assembly, part of the FGAM synthase complex composed of 1 PurL, 1 PurQ and 2 PurS subunits.

The protein localises to the cytoplasm. It carries out the reaction N(2)-formyl-N(1)-(5-phospho-beta-D-ribosyl)glycinamide + L-glutamine + ATP + H2O = 2-formamido-N(1)-(5-O-phospho-beta-D-ribosyl)acetamidine + L-glutamate + ADP + phosphate + H(+). The catalysed reaction is L-glutamine + H2O = L-glutamate + NH4(+). It participates in purine metabolism; IMP biosynthesis via de novo pathway; 5-amino-1-(5-phospho-D-ribosyl)imidazole from N(2)-formyl-N(1)-(5-phospho-D-ribosyl)glycinamide: step 1/2. Functionally, part of the phosphoribosylformylglycinamidine synthase complex involved in the purines biosynthetic pathway. Catalyzes the ATP-dependent conversion of formylglycinamide ribonucleotide (FGAR) and glutamine to yield formylglycinamidine ribonucleotide (FGAM) and glutamate. The FGAM synthase complex is composed of three subunits. PurQ produces an ammonia molecule by converting glutamine to glutamate. PurL transfers the ammonia molecule to FGAR to form FGAM in an ATP-dependent manner. PurS interacts with PurQ and PurL and is thought to assist in the transfer of the ammonia molecule from PurQ to PurL. The protein is Phosphoribosylformylglycinamidine synthase subunit PurQ of Corynebacterium efficiens (strain DSM 44549 / YS-314 / AJ 12310 / JCM 11189 / NBRC 100395).